The sequence spans 159 residues: Ecotin (159 aa).

The N-terminal stretch at 1 to 22 is a signal peptide; it reads MRPTPLSTILALTMAATAPAMA. A disulfide bridge links cysteine 68 with cysteine 105.

Belongs to the protease inhibitor I11 (ecotin) family. Homodimer.

Its subcellular location is the periplasm. Its function is as follows. General inhibitor of family S1 serine proteases. The protein is Ecotin of Pseudomonas putida (strain W619).